The following is a 530-amino-acid chain: Developmental and secondary metabolism regulator VEL1 (530 aa).

Residues 26-220 form the Velvet domain; that stretch reads NRSLWYQMTV…ADQGCQVRIR (195 aa). The Nuclear localization signal motif lies at 40-45; the sequence is ERARAC. Positions 206-516 are disordered; the sequence is LSKTVADQGC…HDQGWYSRAD (311 aa). Positions 244 to 253 are enriched in basic and acidic residues; sequence FERREEDFGR. Positions 295–305 are enriched in pro residues; sequence YPPPPPPPSYE. Residues 347-356 show a composition bias toward polar residues; the sequence is YAPTAQSPYS. Basic and acidic residues predominate over residues 380–389; it reads VKHDLYDRRQ. Low complexity predominate over residues 390-404; sequence STSSYVPPSPSVYST. Pro residues predominate over residues 415–426; the sequence is SYPPTPVAAPRP. The interval 429–460 is PEST; the sequence is MHSQTSLPALKIDQLVSPVSPLPPIEPQTGPA. Residues 478 to 490 are compositionally biased toward polar residues; the sequence is FAQSTRPLHNGQR.

The protein belongs to the velvet family. VeA subfamily. Component of the heterotrimeric velvet complex composed of LAE1, VEL1 and VEL2; VEL1 acting as a bridging protein between LAE1 and VEL2. Interacts with LAE1.

Its subcellular location is the nucleus. It localises to the cytoplasm. Component of the velvet transcription factor complex that controls sexual/asexual developmental ratio in response to light, promoting sexual development in the darkness while stimulating asexual sporulation under illumination. The velvet complex hat acts as a global regulator for secondary metabolite gene expression. Controls positively the expression of the gibberellins, fumonisins and fusarin C gene clusters. Controls the expression of the fusaric acid gene cluster. Controls negatively the expression of the bikaverin gene cluster. Regulates the expression of laeA. Plays a crucial role in virulence. This Gibberella fujikuroi (strain CBS 195.34 / IMI 58289 / NRRL A-6831) (Bakanae and foot rot disease fungus) protein is Developmental and secondary metabolism regulator VEL1.